We begin with the raw amino-acid sequence, 434 residues long: Ribosomal protein uS12 methylthiotransferase RimO (434 aa).

The region spanning 6 to 122 (SKLYLLTLGC…IIAELGGHYK (117 aa)) is the MTTase N-terminal domain. Residues Cys-15, Cys-51, Cys-85, Cys-146, Cys-150, and Cys-153 each contribute to the [4Fe-4S] cluster site. Positions 132 to 361 (LTPPYFSYLK…MAAQEEIAYA (230 aa)) constitute a Radical SAM core domain. Positions 364–434 (QALVGSFMPV…AFDLFGSLVL (71 aa)) constitute a TRAM domain.

It belongs to the methylthiotransferase family. RimO subfamily. [4Fe-4S] cluster is required as a cofactor.

The protein resides in the cytoplasm. The catalysed reaction is L-aspartate(89)-[ribosomal protein uS12]-hydrogen + (sulfur carrier)-SH + AH2 + 2 S-adenosyl-L-methionine = 3-methylsulfanyl-L-aspartate(89)-[ribosomal protein uS12]-hydrogen + (sulfur carrier)-H + 5'-deoxyadenosine + L-methionine + A + S-adenosyl-L-homocysteine + 2 H(+). Its function is as follows. Catalyzes the methylthiolation of an aspartic acid residue of ribosomal protein uS12. This chain is Ribosomal protein uS12 methylthiotransferase RimO, found in Chloroherpeton thalassium (strain ATCC 35110 / GB-78).